We begin with the raw amino-acid sequence, 180 residues long: MELDLSLDASGVEIPEPLNGSLFAHDSWVPVLQQWIELVRSNPDLSCPSVVRQAPEVSLGLHFTNDAGIAELNSQWRQKSGPTDVLSFAALDDTPDWLEGEAVELGDIIVSVDTAQRQAQNHNHSLGYELHWLISHGLLHLLGWDHPDERRLSGMLALQERLLDSTGNVLPKGQRPVEIE.

Zn(2+) is bound by residues His136, His140, and His146.

This sequence belongs to the endoribonuclease YbeY family. The cofactor is Zn(2+).

It is found in the cytoplasm. Functionally, single strand-specific metallo-endoribonuclease involved in late-stage 70S ribosome quality control and in maturation of the 3' terminus of the 16S rRNA. The chain is Endoribonuclease YbeY from Synechococcus sp. (strain CC9902).